Reading from the N-terminus, the 169-residue chain is MKEMLLDKLKNCKKLVIMGIGNELKGDDAVGIYVVKKLMRYFGEEKEFINIKNLYLINAGTVPDFFTDILKEIKPTHILIIDCALMDKDVGEVKIIKEDEIINYSFSTHTLPLSIIVKYLKKFINAEIIILGIQPKIIDFCPISEEVKLSGDKLVNTLIEIIEELKLAK.

This sequence belongs to the peptidase A31 family.

The chain is Putative hydrogenase maturation protease MJ0631 from Methanocaldococcus jannaschii (strain ATCC 43067 / DSM 2661 / JAL-1 / JCM 10045 / NBRC 100440) (Methanococcus jannaschii).